Reading from the N-terminus, the 432-residue chain is Glutamate-1-semialdehyde 2,1-aminomutase (432 aa).

An N6-(pyridoxal phosphate)lysine modification is found at K265.

It belongs to the class-III pyridoxal-phosphate-dependent aminotransferase family. HemL subfamily. In terms of assembly, homodimer. It depends on pyridoxal 5'-phosphate as a cofactor.

The protein localises to the cytoplasm. It catalyses the reaction (S)-4-amino-5-oxopentanoate = 5-aminolevulinate. Its pathway is porphyrin-containing compound metabolism; protoporphyrin-IX biosynthesis; 5-aminolevulinate from L-glutamyl-tRNA(Glu): step 2/2. This chain is Glutamate-1-semialdehyde 2,1-aminomutase, found in Vibrio cholerae serotype O1 (strain ATCC 39541 / Classical Ogawa 395 / O395).